Consider the following 329-residue polypeptide: MEPAEEGEILAHRRFTATKMEYEKIRIIGEGTFGQVILARKGRARYALKKVSKEKEGLSVTTIREVQVLRAMGHPSIVRLIEVVVEPGGDIYMVFPYFPYDLNRFIRSNKMTCSEIKHIFYQIAQGVCYIHSKGIMHRDLKSANILLDQKLNASIADFGMARYTTKTGAYTPGMVTLWYRAPEILLGSSSYTYAVDIWSLGCILTEMYLGHMIFQGSTEMLQLEMVIHACGSINENSYPGVQDLPGFRNFRLPQSPRRIEGIIRKHDASAVELVSKMLCLDPSKRITVEQVVGSKYFEHEARRDASSAGLQGCSYREDRLSLSKRKNVD.

Residues Y22 to F297 form the Protein kinase domain. ATP contacts are provided by residues I28 to V36 and K49. The active-site Proton acceptor is the D139.

The protein belongs to the protein kinase superfamily. CMGC Ser/Thr protein kinase family. CDC2/CDKX subfamily. Component of the CTDK-I complex.

Its subcellular location is the nucleus. The protein localises to the nucleolus. The enzyme catalyses [DNA-directed RNA polymerase] + ATP = phospho-[DNA-directed RNA polymerase] + ADP + H(+). Functionally, catalytic subunit of the CTDK-I complex, which hyperphosphorylates the C-terminal heptapeptide repeat domain (CTD) of the largest RNA polymerase II subunit. Involved in RNA polymerase II transcriptional elongation and pre-mRNA 3'-end processing. The sequence is that of Probable CTD kinase subunit alpha homolog (CTK1) from Encephalitozoon cuniculi (strain GB-M1) (Microsporidian parasite).